The chain runs to 451 residues: UDP-N-acetylmuramoylalanine--D-glutamate ligase (451 aa).

Position 120–126 (120–126) interacts with ATP; the sequence is GSNGKTT.

It belongs to the MurCDEF family.

Its subcellular location is the cytoplasm. It catalyses the reaction UDP-N-acetyl-alpha-D-muramoyl-L-alanine + D-glutamate + ATP = UDP-N-acetyl-alpha-D-muramoyl-L-alanyl-D-glutamate + ADP + phosphate + H(+). It participates in cell wall biogenesis; peptidoglycan biosynthesis. Functionally, cell wall formation. Catalyzes the addition of glutamate to the nucleotide precursor UDP-N-acetylmuramoyl-L-alanine (UMA). The polypeptide is UDP-N-acetylmuramoylalanine--D-glutamate ligase (Bacillus velezensis (strain DSM 23117 / BGSC 10A6 / LMG 26770 / FZB42) (Bacillus amyloliquefaciens subsp. plantarum)).